The following is a 196-amino-acid chain: 3-isopropylmalate dehydratase small subunit (196 aa).

This sequence belongs to the LeuD family. LeuD type 1 subfamily. In terms of assembly, heterodimer of LeuC and LeuD.

It carries out the reaction (2R,3S)-3-isopropylmalate = (2S)-2-isopropylmalate. It functions in the pathway amino-acid biosynthesis; L-leucine biosynthesis; L-leucine from 3-methyl-2-oxobutanoate: step 2/4. In terms of biological role, catalyzes the isomerization between 2-isopropylmalate and 3-isopropylmalate, via the formation of 2-isopropylmaleate. The chain is 3-isopropylmalate dehydratase small subunit from Corynebacterium aurimucosum (strain ATCC 700975 / DSM 44827 / CIP 107346 / CN-1) (Corynebacterium nigricans).